A 202-amino-acid polypeptide reads, in one-letter code: ATP-dependent Clp protease proteolytic subunit (202 aa).

The active-site Nucleophile is Ser-101. Residue His-126 is part of the active site.

It belongs to the peptidase S14 family. Component of the chloroplastic Clp protease core complex.

The protein localises to the plastid. Its subcellular location is the chloroplast stroma. The catalysed reaction is Hydrolysis of proteins to small peptides in the presence of ATP and magnesium. alpha-casein is the usual test substrate. In the absence of ATP, only oligopeptides shorter than five residues are hydrolyzed (such as succinyl-Leu-Tyr-|-NHMec, and Leu-Tyr-Leu-|-Tyr-Trp, in which cleavage of the -Tyr-|-Leu- and -Tyr-|-Trp bonds also occurs).. In terms of biological role, cleaves peptides in various proteins in a process that requires ATP hydrolysis. Has a chymotrypsin-like activity. Plays a major role in the degradation of misfolded proteins. This chain is ATP-dependent Clp protease proteolytic subunit, found in Platanus occidentalis (Sycamore).